Reading from the N-terminus, the 32-residue chain is Tail virion protein G9P (32 aa).

Residues 4-24 form a helical membrane-spanning segment; the sequence is LSYFFAAYCIGWVISHSILVF.

The protein belongs to the inovirus G9P protein family.

The protein localises to the virion. Its subcellular location is the host membrane. Functionally, may initiate with G7P the virion concomitant assembly-budding process, by interacting with the packaging signal of the viral genome. The assembly-budding takes place at the host inner membrane. In turn, G7P and G9P are present at the end of the filamentous virion that emerges first from the bacterial host. This Escherichia phage If1 (Bacteriophage If1) protein is Tail virion protein G9P (IX).